Here is a 91-residue protein sequence, read N- to C-terminus: Large ribosomal subunit protein bL27 (91 aa).

Belongs to the bacterial ribosomal protein bL27 family.

The polypeptide is Large ribosomal subunit protein bL27 (Deinococcus deserti (strain DSM 17065 / CIP 109153 / LMG 22923 / VCD115)).